Reading from the N-terminus, the 355-residue chain is MAGENGLTYAAAGVDIDAGNAMVEAIKPLVRSTRRPGADAEIGGFGGLFDLKAAGFSDPILVAANDGVGTKVKIAIETGRHDTIGIDLVAMCVNDIVVQGAEPLFFLDYYATGKLVPGVGAAIVTGIAEGCRQAGCALIGGETAEMPGLYDGSDYDLAGFAVGAAERGALLPTDGVAPGDLVLGLPSSGVHSNGFSLVRRIVSASGLPWDAPAPFAPGRSLGEALLTPTRIYVRPLLAALRATGRGAIKALAHITGGGFPDNLPRVLPEAVGIALDLDAVAVPPVFGWLARTGGVAVPEMLRTFNCGIGMVVVVAPERIEAVEAALRAAGEAPVRLGTVTPRGEAPVSFAGRLGL.

It belongs to the AIR synthase family.

The protein localises to the cytoplasm. The enzyme catalyses 2-formamido-N(1)-(5-O-phospho-beta-D-ribosyl)acetamidine + ATP = 5-amino-1-(5-phospho-beta-D-ribosyl)imidazole + ADP + phosphate + H(+). Its pathway is purine metabolism; IMP biosynthesis via de novo pathway; 5-amino-1-(5-phospho-D-ribosyl)imidazole from N(2)-formyl-N(1)-(5-phospho-D-ribosyl)glycinamide: step 2/2. This Methylobacterium sp. (strain 4-46) protein is Phosphoribosylformylglycinamidine cyclo-ligase.